A 37-amino-acid polypeptide reads, in one-letter code: Non-specific lipid-transfer protein P4 (37 aa).

Belongs to the plant LTP family.

The protein localises to the secreted. Its function is as follows. Plant non-specific lipid-transfer proteins transfer phospholipids as well as galactolipids across membranes. May play a role in wax or cutin deposition in the cell walls of expanding epidermal cells and certain secretory tissues. The sequence is that of Non-specific lipid-transfer protein P4 from Vitis sp. (Grape).